The primary structure comprises 325 residues: GMP reductase (325 aa).

Residue Cys174 is the Thioimidate intermediate of the active site. 203–226 (IVADGGIRNNGDIAKSIRFGASMC) provides a ligand contact to NADP(+).

The protein belongs to the IMPDH/GMPR family. GuaC type 2 subfamily.

The enzyme catalyses IMP + NH4(+) + NADP(+) = GMP + NADPH + 2 H(+). Catalyzes the irreversible NADPH-dependent deamination of GMP to IMP. It functions in the conversion of nucleobase, nucleoside and nucleotide derivatives of G to A nucleotides, and in maintaining the intracellular balance of A and G nucleotides. The polypeptide is GMP reductase (Ligilactobacillus salivarius (strain UCC118) (Lactobacillus salivarius)).